The sequence spans 485 residues: NADH-quinone oxidoreductase subunit N (485 aa).

The next 14 helical transmembrane spans lie at 8-28 (LIALLPLLIVGLTVVVVMLSI), 35-55 (FLNATLSVIGLNAALVSLWFV), 71-91 (GFAMLYTGLVLLASLATCTFA), 105-125 (FYLLVLIAALGGILLANANHL), 127-147 (SLFLGIELISLPLFGLVGYAF), 159-179 (YTILSAAASSFLLFGMALVYA), 203-223 (LLAGFGMMIVGLGFKLSLVPF), 235-255 (PAPVSTFLATASKIAIFGVVM), 271-291 (VVLAIIAFASIIFGNLMALSQ), 297-317 (LLGYSSISHLGYLLVALIALQ), 326-346 (VGVYLAGYLFSSLGAFGVVSL), 373-393 (AAVMTVMMLSLAGIPMTLGFI), 408-430 (WWLVGAVVVGSAIGLYYYLRVAV), and 450-470 (YSAGGIVVLISALLVLVLGVW).

The protein belongs to the complex I subunit 2 family. As to quaternary structure, NDH-1 is composed of 13 different subunits. Subunits NuoA, H, J, K, L, M, N constitute the membrane sector of the complex.

It is found in the cell inner membrane. It carries out the reaction a quinone + NADH + 5 H(+)(in) = a quinol + NAD(+) + 4 H(+)(out). Its function is as follows. NDH-1 shuttles electrons from NADH, via FMN and iron-sulfur (Fe-S) centers, to quinones in the respiratory chain. The immediate electron acceptor for the enzyme in this species is believed to be ubiquinone. Couples the redox reaction to proton translocation (for every two electrons transferred, four hydrogen ions are translocated across the cytoplasmic membrane), and thus conserves the redox energy in a proton gradient. In Shigella boydii serotype 4 (strain Sb227), this protein is NADH-quinone oxidoreductase subunit N.